A 278-amino-acid polypeptide reads, in one-letter code: Transmembrane protein 41B (278 aa).

Residues 1-31 (MQVHERSHTGGHTFQCNHGNEKKAPAAGKVH) are disordered. 6 consecutive transmembrane segments (helical) span residues 39–59 (MSLL…FLVY), 96–116 (FYVE…TFAI), 142–162 (CSGL…RPVV), 184–204 (LINY…FINI), 212–232 (PLKV…FVAI), and 249–269 (SWNS…PAIF). A VTT domain; required for its function in autophagy region spans residues 127–238 (GFLYPFPLAL…FVAIKAGTTL (112 aa)).

It belongs to the TMEM41 family.

It localises to the endoplasmic reticulum membrane. Its subcellular location is the endomembrane system. It catalyses the reaction a 1,2-diacyl-sn-glycero-3-phospho-L-serine(in) = a 1,2-diacyl-sn-glycero-3-phospho-L-serine(out). It carries out the reaction cholesterol(in) = cholesterol(out). The enzyme catalyses a 1,2-diacyl-sn-glycero-3-phosphocholine(in) = a 1,2-diacyl-sn-glycero-3-phosphocholine(out). The catalysed reaction is a 1,2-diacyl-sn-glycero-3-phosphoethanolamine(in) = a 1,2-diacyl-sn-glycero-3-phosphoethanolamine(out). Phospholipid scramblase involved in lipid homeostasis and membrane dynamics processes. Has phospholipid scramblase activity toward cholesterol and phosphatidylserine, as well as phosphatidylethanolamine and phosphatidylcholine. Required for autophagosome formation: participates in early stages of autophagosome biogenesis at the endoplasmic reticulum (ER) membrane by reequilibrating the leaflets of the ER as lipids are extracted by atg2 (atg2a or atg2b) to mediate autophagosome assembly. In addition to autophagy, involved in other processes in which phospholipid scramblase activity is required. Required for normal motor neuron development. This is Transmembrane protein 41B from Xenopus laevis (African clawed frog).